A 344-amino-acid chain; its full sequence is Phosphate acyltransferase (344 aa).

It belongs to the PlsX family. Homodimer. Probably interacts with PlsY.

Its subcellular location is the cytoplasm. The enzyme catalyses a fatty acyl-[ACP] + phosphate = an acyl phosphate + holo-[ACP]. It participates in lipid metabolism; phospholipid metabolism. Functionally, catalyzes the reversible formation of acyl-phosphate (acyl-PO(4)) from acyl-[acyl-carrier-protein] (acyl-ACP). This enzyme utilizes acyl-ACP as fatty acyl donor, but not acyl-CoA. The polypeptide is Phosphate acyltransferase (Enterobacter sp. (strain 638)).